A 223-amino-acid chain; its full sequence is MDIANQLYMKLREEYKIDQKEFISSYICGKTRNVFATILATILSQNSTDKSALIAFSKLNETVGEITPDRIKHADINTIIDAIRVAGLGNSKARYIKNVAEVINDLDLNIEIDCQKLRDFLTAIEGIGDKTADVVLLTCFRCREFPIDTHIRRVISRLGFLGSSPKYKDISEYFKTRFSSEDLLNLHHLLIAHGRKTCKSRKPICDKCVIRDYCKYYLDNIKN.

The HhH domain occupies R118–L137. The [4Fe-4S] cluster site is built by C198, C205, C208, and C214.

It belongs to the Nth/MutY family. It depends on [4Fe-4S] cluster as a cofactor.

The catalysed reaction is 2'-deoxyribonucleotide-(2'-deoxyribose 5'-phosphate)-2'-deoxyribonucleotide-DNA = a 3'-end 2'-deoxyribonucleotide-(2,3-dehydro-2,3-deoxyribose 5'-phosphate)-DNA + a 5'-end 5'-phospho-2'-deoxyribonucleoside-DNA + H(+). Its function is as follows. Probably part of a 4-gene DNA damage response locus in which the upstream ups system, in combination with this downstream locus, functions in homologous recombination to rescue Sulfolobales from DNA-damaging threats. DNA repair enzyme that has both DNA N-glycosylase activity and AP-lyase activity. The DNA N-glycosylase activity releases various damaged pyrimidines from DNA by cleaving the N-glycosidic bond, leaving an AP (apurinic/apyrimidinic) site. The AP-lyase activity cleaves the phosphodiester bond 3' to the AP site by a beta-elimination, leaving a 3'-terminal unsaturated sugar and a product with a terminal 5'-phosphate. Nicks UV-treated plasmid DNA in a dose-dependent manner, has no activity on untreated DNA. The chain is Endonuclease III from Sulfolobus acidocaldarius (strain ATCC 33909 / DSM 639 / JCM 8929 / NBRC 15157 / NCIMB 11770).